Consider the following 100-residue polypeptide: Putative pterin-4-alpha-carbinolamine dehydratase (100 aa).

Belongs to the pterin-4-alpha-carbinolamine dehydratase family.

It carries out the reaction (4aS,6R)-4a-hydroxy-L-erythro-5,6,7,8-tetrahydrobiopterin = (6R)-L-erythro-6,7-dihydrobiopterin + H2O. The protein is Putative pterin-4-alpha-carbinolamine dehydratase of Allorhizobium ampelinum (strain ATCC BAA-846 / DSM 112012 / S4) (Agrobacterium vitis (strain S4)).